A 428-amino-acid chain; its full sequence is Light-independent protochlorophyllide reductase subunit N (428 aa).

[4Fe-4S] cluster contacts are provided by cysteine 29, cysteine 54, and cysteine 115.

It belongs to the BchN/ChlN family. In terms of assembly, protochlorophyllide reductase is composed of three subunits; BchL, BchN and BchB. Forms a heterotetramer of two BchB and two BchN subunits. It depends on [4Fe-4S] cluster as a cofactor.

It carries out the reaction chlorophyllide a + oxidized 2[4Fe-4S]-[ferredoxin] + 2 ADP + 2 phosphate = protochlorophyllide a + reduced 2[4Fe-4S]-[ferredoxin] + 2 ATP + 2 H2O. Its pathway is porphyrin-containing compound metabolism; bacteriochlorophyll biosynthesis (light-independent). Component of the dark-operative protochlorophyllide reductase (DPOR) that uses Mg-ATP and reduced ferredoxin to reduce ring D of protochlorophyllide (Pchlide) to form chlorophyllide a (Chlide). This reaction is light-independent. The NB-protein (BchN-BchB) is the catalytic component of the complex. The polypeptide is Light-independent protochlorophyllide reductase subunit N (Cereibacter sphaeroides (strain KD131 / KCTC 12085) (Rhodobacter sphaeroides)).